The sequence spans 212 residues: Large ribosomal subunit protein uL1 (212 aa).

Belongs to the universal ribosomal protein uL1 family. In terms of assembly, part of the 50S ribosomal subunit.

Its function is as follows. Binds directly to 23S rRNA. Probably involved in E site tRNA release. In terms of biological role, protein L1 is also a translational repressor protein, it controls the translation of its operon by binding to its mRNA. This is Large ribosomal subunit protein uL1 from Methanothermobacter thermautotrophicus (strain ATCC 29096 / DSM 1053 / JCM 10044 / NBRC 100330 / Delta H) (Methanobacterium thermoautotrophicum).